Consider the following 474-residue polypeptide: TOM1-like protein 1 (474 aa).

The region spanning 22–154 (ATFAGVLTED…DLLKKGVQFP (133 aa)) is the VHS domain. Positions 153–180 (FPPSDGEPETRQEAGQISPNRPTSVPTA) are disordered. The span at 165–178 (EAGQISPNRPTSVP) shows a compositional bias: polar residues. Phosphoserine is present on Ser-170. The 89-residue stretch at 199–287 (EQIGKLHSEL…AVLGYERFTR (89 aa)) folds into the GAT domain. Residues 291 to 317 (RLLEQKRNRTEATRTSSEPSAPSCDLL) form a disordered region. Positions 293–302 (LEQKRNRTEA) are enriched in basic and acidic residues. Phosphoserine is present on residues Ser-313 and Ser-320. The segment at 392-395 (YDNF) is interaction with GRB2. Positions 420–424 (LPPLP) match the SH3-binding motif. The tract at residues 441-444 (YEVM) is interaction with PIK3R1. Phosphotyrosine is present on Tyr-457. The short motif at 457–460 (YEEI) is the SH2-binding element.

It belongs to the TOM1 family. Interacts with LYN. Interacts with the SH2 and SH3 domains of FYN when phosphorylated. Also interacts with GRB2 and PIK3R1 when phosphorylated. In terms of processing, phosphorylated on tyrosines by LYN. Phosphorylated on tyrosines by FYN. Strongly expressed in brain and kidney, expressed at intermediate levels skin and heart, and weakly expressed in thymus. Not expressed in liver and spleen.

It localises to the golgi apparatus. The protein resides in the golgi stack. Its subcellular location is the endosome membrane. The protein localises to the cytoplasm. It is found in the membrane. In terms of biological role, probable adapter protein involved in signaling pathways. Interacts with the SH2 and SH3 domains of various signaling proteins when it is phosphorylated. May promote FYN activation, possibly by disrupting intramolecular SH3-dependent interactions. The protein is TOM1-like protein 1 (Tom1l1) of Mus musculus (Mouse).